Reading from the N-terminus, the 323-residue chain is Oligodendrocyte transcription factor 2 (323 aa).

2 stretches are compositionally biased toward polar residues: residues 1 to 13 (MDSD…SRPS) and 27 to 45 (KGSS…STPS). The tract at residues 1 to 107 (MDSDASLVSS…KKQMTEPELQ (107 aa)) is disordered. Positions 76–93 (KSSSSSTSSSTSSAAASS) are enriched in low complexity. The 55-residue stretch at 108-162 (QLRLKINSRERKRMHDLNIAMDGLREVMPYAHGPSVRKLSKIATLLLARNYILML) folds into the bHLH domain.

In terms of assembly, interacts with NKX2-2. Interacts with ZNF488. In terms of tissue distribution, expressed in the brain, in oligodendrocytes. Strongly expressed in oligodendrogliomas, while expression is weak to moderate in astrocytomas. Expression in glioblastomas highly variable.

Its subcellular location is the nucleus. It localises to the cytoplasm. In terms of biological role, required for oligodendrocyte and motor neuron specification in the spinal cord, as well as for the development of somatic motor neurons in the hindbrain. Functions together with ZNF488 to promote oligodendrocyte differentiation. Cooperates with OLIG1 to establish the pMN domain of the embryonic neural tube. Antagonist of V2 interneuron and of NKX2-2-induced V3 interneuron development. The protein is Oligodendrocyte transcription factor 2 (OLIG2) of Homo sapiens (Human).